The sequence spans 1351 residues: D-lysergyl-peptide-synthetase subunit 2 (1351 aa).

The tract at residues Arg-285–Arg-684 is adenylation (A) domain. One can recognise a Carrier domain in the interval Ala-828–Lys-904. Position 865 is an O-(pantetheine 4'-phosphoryl)serine (Ser-865). The interval Glu-941–Gln-1340 is condensation (C) domain.

This sequence belongs to the NRP synthetase family.

Its pathway is alkaloid biosynthesis; ergot alkaloid biosynthesis. In terms of biological role, D-lysergyl-peptide-synthetase subunit 2; part of the gene cluster that mediates the biosynthesis of fungal ergot alkaloid ergovaline, the predominant ergopeptine product in E.festucae var. lolii. DmaW catalyzes the first step of ergot alkaloid biosynthesis by condensing dimethylallyl diphosphate (DMAP) and tryptophan to form 4-dimethylallyl-L-tryptophan. The second step is catalyzed by the methyltransferase easF that methylates 4-dimethylallyl-L-tryptophan in the presence of S-adenosyl-L-methionine, resulting in the formation of 4-dimethylallyl-L-abrine. The catalase easC and the FAD-dependent oxidoreductase easE then transform 4-dimethylallyl-L-abrine to chanoclavine-I which is further oxidized by easD in the presence of NAD(+), resulting in the formation of chanoclavine-I aldehyde. Agroclavine dehydrogenase easG then mediates the conversion of chanoclavine-I aldehyde to agroclavine via a non-enzymatic adduct reaction: the substrate is an iminium intermediate that is formed spontaneously from chanoclavine-I aldehyde in the presence of glutathione. The presence of easA is not required to complete this reaction. Further conversion of agroclavine to paspalic acid is a two-step process involving oxidation of agroclavine to elymoclavine and of elymoclavine to paspalic acid, the second step being performed by the elymoclavine oxidase cloA. Paspalic acid is then further converted to D-lysergic acid. Ergovaline is assembled from D-lysergic acid and three different amino acids by the D-lysergyl-peptide-synthetase composed of a monomudular (lpsB) and a trimodular (lpsA) nonribosomal peptide synthetase subunit. This Epichloe festucae var. lolii (Neotyphodium lolii) protein is D-lysergyl-peptide-synthetase subunit 2.